A 1235-amino-acid polypeptide reads, in one-letter code: DNA polymerase (1235 aa).

The 115-residue stretch at Leu773–Val887 folds into the DOD-type homing endonuclease domain.

Belongs to the DNA polymerase type-B family. Post-translationally, this protein undergoes a protein self splicing that involves a post-translational excision of the intervening region (intein) followed by peptide ligation.

The enzyme catalyses DNA(n) + a 2'-deoxyribonucleoside 5'-triphosphate = DNA(n+1) + diphosphate. The chain is DNA polymerase (pol) from Pyrococcus horikoshii (strain ATCC 700860 / DSM 12428 / JCM 9974 / NBRC 100139 / OT-3).